The following is a 142-amino-acid chain: Large ribosomal subunit protein uL22c (142 aa).

This sequence belongs to the universal ribosomal protein uL22 family. As to quaternary structure, part of the 50S ribosomal subunit.

It localises to the plastid. The protein resides in the chloroplast. Functionally, this protein binds specifically to 23S rRNA. The globular domain of the protein is located near the polypeptide exit tunnel on the outside of the subunit, while an extended beta-hairpin is found that lines the wall of the exit tunnel in the center of the 70S ribosome. This is Large ribosomal subunit protein uL22c (rpl22) from Oenothera parviflora (Small-flowered evening primrose).